The following is a 156-amino-acid chain: ATP synthase subunit b (156 aa).

A helical transmembrane segment spans residues 7–29 (LFAQMVVFLVLAWFTMKFVWPPL).

It belongs to the ATPase B chain family. F-type ATPases have 2 components, F(1) - the catalytic core - and F(0) - the membrane proton channel. F(1) has five subunits: alpha(3), beta(3), gamma(1), delta(1), epsilon(1). F(0) has three main subunits: a(1), b(2) and c(10-14). The alpha and beta chains form an alternating ring which encloses part of the gamma chain. F(1) is attached to F(0) by a central stalk formed by the gamma and epsilon chains, while a peripheral stalk is formed by the delta and b chains.

Its subcellular location is the cell inner membrane. In terms of biological role, f(1)F(0) ATP synthase produces ATP from ADP in the presence of a proton or sodium gradient. F-type ATPases consist of two structural domains, F(1) containing the extramembraneous catalytic core and F(0) containing the membrane proton channel, linked together by a central stalk and a peripheral stalk. During catalysis, ATP synthesis in the catalytic domain of F(1) is coupled via a rotary mechanism of the central stalk subunits to proton translocation. Its function is as follows. Component of the F(0) channel, it forms part of the peripheral stalk, linking F(1) to F(0). This Burkholderia pseudomallei (strain 668) protein is ATP synthase subunit b.